Reading from the N-terminus, the 317-residue chain is Proline-rich protein 2 (317 aa).

Positions 1–16 are cleaved as a signal peptide; sequence MLVVLFTVALLALSSA. The disordered stretch occupies residues 15–317; that stretch reads SAQGPREELQ…PPQGRPQGPQ (303 aa). Residues 32-44 show a composition bias toward pro residues; the sequence is QRPPPSGSQPRPP. The N-linked (GlcNAc...) asparagine glycan is linked to N46. 2 stretches are compositionally biased toward pro residues: residues 51–183 and 204–288; these read GPPP…PPAG and QSPP…PTQG. The segment covering 289 to 305 has biased composition (low complexity); the sequence is PHPTGGPQQTPPLAGNP. Pro residues predominate over residues 306–317; sequence QGPPQGRPQGPQ.

Its subcellular location is the secreted. This Mus musculus (Mouse) protein is Proline-rich protein 2 (Prp2).